A 259-amino-acid chain; its full sequence is Acetylglutamate kinase (259 aa).

Residues 45–46 (GG), R67, and N159 contribute to the substrate site.

Belongs to the acetylglutamate kinase family. ArgB subfamily.

The protein resides in the cytoplasm. It carries out the reaction N-acetyl-L-glutamate + ATP = N-acetyl-L-glutamyl 5-phosphate + ADP. It functions in the pathway amino-acid biosynthesis; L-arginine biosynthesis; N(2)-acetyl-L-ornithine from L-glutamate: step 2/4. Catalyzes the ATP-dependent phosphorylation of N-acetyl-L-glutamate. The polypeptide is Acetylglutamate kinase (Aeromonas salmonicida (strain A449)).